The following is a 198-amino-acid chain: Na(+)-translocating NADH-quinone reductase subunit E (198 aa).

The next 6 membrane-spanning stretches (helical) occupy residues 11-31 (SIFI…FLAV), 39-59 (FGLG…NNLV), 77-97 (FLNF…LEMV), 110-130 (GIFL…SFMV), 140-160 (IVYG…LAGI), and 176-196 (LGIT…FSGV).

Belongs to the NqrDE/RnfAE family. In terms of assembly, composed of six subunits; NqrA, NqrB, NqrC, NqrD, NqrE and NqrF.

The protein resides in the cell inner membrane. It carries out the reaction a ubiquinone + n Na(+)(in) + NADH + H(+) = a ubiquinol + n Na(+)(out) + NAD(+). Functionally, NQR complex catalyzes the reduction of ubiquinone-1 to ubiquinol by two successive reactions, coupled with the transport of Na(+) ions from the cytoplasm to the periplasm. NqrA to NqrE are probably involved in the second step, the conversion of ubisemiquinone to ubiquinol. The sequence is that of Na(+)-translocating NADH-quinone reductase subunit E from Vibrio campbellii (strain ATCC BAA-1116).